Here is a 402-residue protein sequence, read N- to C-terminus: Aminotransferase-like protein FGM3 (402 aa).

Pyridoxal 5'-phosphate is bound by residues 137 to 138 (TI), Asp-218, and 282 to 283 (FG).

This sequence belongs to the class-V pyridoxal-phosphate-dependent aminotransferase family. Csd subfamily.

Its function is as follows. Aminotransferase-like protein; part of the Fg3_54/C64 gene cluster that mediates the biosynthesis of the octapeptide fusaoctaxin A, a virulence factor that is required for cell-to-cell invasiveness of plant host. The 2 nonribosomal peptide synthetases NRPS9 and NRPS5 form an assembly line which likely utilizes GABA as a starter unit (loaded on the unique module M1 of NRPS9) and sequentially incorporates seven extender units composed of the residues L-Ala, L-allo-Ile, L-Ser, L-Val, L-Ser, L-Leu and L-Leu, respectively. During the process, each of the residues that are tethered on modules M3-M7 of NRPS5 containing an E domain can undergo an epimerization reaction to produce a D-configuration before the transpeptidation reaction occurs. The elongation of the peptidyl chain might be terminated by module M8-mediated L-Leu incorporation, followed by R domain-catalyzed 4 electron reduction to release the resulting octapeptide from the assembly line as an alcohol. Fusaoctaxin A is cleaved by the cluster specific ABC transporter FGM5 to the pentapeptide fusapentaxin A and the tripeptide fusatrixin A. The other enzymes from the cluster, FGM1, FGM2, FGM3 and FGM9 seem not to be involved in the biosynthesis of fusaoctaxin A and their functions have still to be determined. The sequence is that of Aminotransferase-like protein FGM3 from Gibberella zeae (strain ATCC MYA-4620 / CBS 123657 / FGSC 9075 / NRRL 31084 / PH-1) (Wheat head blight fungus).